The following is a 557-amino-acid chain: Mercuric reductase (557 aa).

In terms of domain architecture, HMA spans 1-65 (MILLSIEGMT…AIEALGYIAK (65 aa)). Residues cysteine 11 and cysteine 14 each contribute to the a metal cation site. Residues alanine 106 and alanine 126 each coordinate FAD. Cysteine 133 and cysteine 138 form a disulfide bridge. FAD is bound by residues lysine 142, alanine 207, aspartate 399, and valine 407. Hg(2+) is bound by residues cysteine 554 and cysteine 555.

The protein belongs to the class-I pyridine nucleotide-disulfide oxidoreductase family. Homodimer. Requires FAD as cofactor.

It carries out the reaction Hg + NADP(+) + H(+) = Hg(2+) + NADPH. Resistance to Hg(2+) in bacteria appears to be governed by a specialized system which includes mercuric reductase. MerA protein is responsible for volatilizing mercury as Hg(0). The polypeptide is Mercuric reductase (merA) (Shewanella putrefaciens (Pseudomonas putrefaciens)).